Here is a 1496-residue protein sequence, read N- to C-terminus: Chromosome partition protein MukB (1496 aa).

Position 63-70 (63-70) interacts with ATP; sequence GGNGAGKS. 2 coiled-coil regions span residues 328–493 and 536–632; these read KLEL…QRLS and KMQA…APAW. Positions 694 to 811 are flexible hinge; sequence PDGSDDVRLN…EVPLFGRAAR (118 aa). 2 coiled-coil regions span residues 861–1171 and 1235–1291; these read NPEE…SAEE and IDAI…LQNI. A compositionally biased stretch (basic and acidic residues) spans 1082-1091; sequence RARSRRDELQ. The interval 1082–1101 is disordered; sequence RARSRRDELQQRLSQQRSRK.

This sequence belongs to the SMC family. MukB subfamily. In terms of assembly, homodimerization via its hinge domain. Binds to DNA via its C-terminal region. Interacts, and probably forms a ternary complex, with MukE and MukF via its C-terminal region. The complex formation is stimulated by calcium or magnesium. Interacts with tubulin-related protein FtsZ.

The protein resides in the cytoplasm. It is found in the nucleoid. Its function is as follows. Plays a central role in chromosome condensation, segregation and cell cycle progression. Functions as a homodimer, which is essential for chromosome partition. Involved in negative DNA supercoiling in vivo, and by this means organize and compact chromosomes. May achieve or facilitate chromosome segregation by condensation DNA from both sides of a centrally located replisome during cell division. This chain is Chromosome partition protein MukB, found in Actinobacillus pleuropneumoniae serotype 7 (strain AP76).